The primary structure comprises 293 residues: ATP synthase subunit a (293 aa).

6 helical membrane passes run 40 to 60 (DSLF…WLAA), 98 to 118 (FVAP…ALDL), 151 to 171 (DLNV…YYGI), 188 to 208 (FHAH…LNLI), 225 to 245 (MFAG…WTGF), and 264 to 284 (AIFH…LTLV).

This sequence belongs to the ATPase A chain family. As to quaternary structure, F-type ATPases have 2 components, CF(1) - the catalytic core - and CF(0) - the membrane proton channel. CF(1) has five subunits: alpha(3), beta(3), gamma(1), delta(1), epsilon(1). CF(0) has three main subunits: a(1), b(2) and c(9-12). The alpha and beta chains form an alternating ring which encloses part of the gamma chain. CF(1) is attached to CF(0) by a central stalk formed by the gamma and epsilon chains, while a peripheral stalk is formed by the delta and b chains.

It is found in the cell inner membrane. Functionally, key component of the proton channel; it plays a direct role in the translocation of protons across the membrane. In Bordetella avium (strain 197N), this protein is ATP synthase subunit a.